Consider the following 309-residue polypeptide: HPr kinase/phosphorylase (309 aa).

Catalysis depends on residues His138 and Lys159. 153–160 serves as a coordination point for ATP; sequence GDSGIGKS. Ser160 contributes to the Mg(2+) binding site. The Proton acceptor; for phosphorylation activity. Proton donor; for dephosphorylation activity role is filled by Asp177. An important for the catalytic mechanism of both phosphorylation and dephosphorylation region spans residues 201–210; the sequence is LEIRGVGIID. A Mg(2+)-binding site is contributed by Glu202. Residue Arg243 is part of the active site. The important for the catalytic mechanism of dephosphorylation stretch occupies residues 264 to 269; it reads PVKTGR.

This sequence belongs to the HPrK/P family. As to quaternary structure, homohexamer. The cofactor is Mg(2+).

It carries out the reaction [HPr protein]-L-serine + ATP = [HPr protein]-O-phospho-L-serine + ADP + H(+). The catalysed reaction is [HPr protein]-O-phospho-L-serine + phosphate + H(+) = [HPr protein]-L-serine + diphosphate. Functionally, catalyzes the ATP- as well as the pyrophosphate-dependent phosphorylation of a specific serine residue in HPr, a phosphocarrier protein of the phosphoenolpyruvate-dependent sugar phosphotransferase system (PTS). HprK/P also catalyzes the pyrophosphate-producing, inorganic phosphate-dependent dephosphorylation (phosphorolysis) of seryl-phosphorylated HPr (P-Ser-HPr). The two antagonistic activities of HprK/P are regulated by several intracellular metabolites, which change their concentration in response to the absence or presence of rapidly metabolisable carbon sources (glucose, fructose, etc.) in the growth medium. Therefore, by controlling the phosphorylation state of HPr, HPrK/P is a sensor enzyme that plays a major role in the regulation of carbon metabolism and sugar transport: it mediates carbon catabolite repression (CCR), and regulates PTS-catalyzed carbohydrate uptake and inducer exclusion. This Streptococcus thermophilus (strain ATCC BAA-491 / LMD-9) protein is HPr kinase/phosphorylase.